Here is a 108-residue protein sequence, read N- to C-terminus: MMDWKEAEELACKFLKKKGYKILERNYRTKYGEIDIVARDGREIVFVEVKSGSGKVDPLERIDLKKVRNLEQTARFYMIQNKLKGPARVDFVRVTPEGIDHFEGIWLG.

Belongs to the UPF0102 family.

The chain is UPF0102 protein Tpet_0671 from Thermotoga petrophila (strain ATCC BAA-488 / DSM 13995 / JCM 10881 / RKU-1).